A 665-amino-acid polypeptide reads, in one-letter code: Cyclic nucleotide-gated cation channel subunit A (665 aa).

Topologically, residues 1–110 (MRHFKVKAMV…DPTLQSHYRW (110 aa)) are cytoplasmic. Residues 111-131 (LAIVSLAVLYNIIFVVGRAVF) form a helical membrane-spanning segment. Residues 132-138 (WEINKSA) are Extracellular-facing. Residue asparagine 135 is glycosylated (N-linked (GlcNAc...) asparagine). Residues 139–159 (PAFWYTLDYLCDFIYLLDTLV) traverse the membrane as a helical segment. At 160-186 (HMHEGFLDQGLLVRDAFRLRRHYFHTK) the chain is on the cytoplasmic side. A helical membrane pass occupies residues 187-207 (GWYLDVLSMLPTDLAYIWWPP). The Extracellular segment spans residues 208-253 (ETCSSLYLPCPVIVRLNRLLRINRLWEWFDRTETATGYPNAFRICK). A helical transmembrane segment spans residues 254–274 (VVLAILVLIHWNACMYFAISY). Residues 275–325 (EIGFSSDSWVYNLNGTRNNTLQRQYIYSFYWSTLTLTTIGETPTPENDVEY) are Cytoplasmic-facing. Residues 326-346 (LFVVADFLAGVLIFATIVGNI) form a helical membrane-spanning segment. Residues 347–481 (GSMISNMNVA…GKLSVVGDDG (135 aa)) lie on the Extracellular side of the membrane. Residues 437 to 559 (LLEA…DGLL), glutamate 496, and arginine 511 contribute to the 3',5'-cyclic GMP site. A helical membrane pass occupies residues 482–502 (ITVLATLGAGSVFGEVSVLEI). The Cytoplasmic segment spans residues 503-665 (AGNRTGNRRT…SSDAAKQNTL (163 aa)). The segment at 633–665 (RSGRLYSLQPKRRPRSRPDATAKSSDAAKQNTL) is disordered. Over residues 654 to 665 (AKSSDAAKQNTL) the composition is skewed to polar residues.

This sequence belongs to the cyclic nucleotide-gated cation channel (TC 1.A.1.5) family. Expressed in antennae and the visual system.

It is found in the membrane. Its function is as follows. Approximately 50-fold more sensitive to cGMP than to cAMP. May be involved in transduction cascades of both invertebrate photoreceptors and olfactory sensillae. The chain is Cyclic nucleotide-gated cation channel subunit A (CngA) from Drosophila melanogaster (Fruit fly).